Here is a 28-residue protein sequence, read N- to C-terminus: Trypsin inhibitor 2 (28 aa).

3 disulfides stabilise this stretch: cysteine 3-cysteine 20, cysteine 10-cysteine 22, and cysteine 16-cysteine 27.

This sequence belongs to the protease inhibitor I7 (squash-type serine protease inhibitor) family.

The protein resides in the secreted. Functionally, inhibits trypsin. This chain is Trypsin inhibitor 2, found in Momordica charantia (Bitter gourd).